A 66-amino-acid polypeptide reads, in one-letter code: MKAYWDSLTKEQQGELAGKVGSTPGYLRLVFNGYKKASFVLAKKLEQYTSGAITKSDLRPDIYPKD.

The chain is Prophage transcriptional regulatory protein (croE) from Escherichia coli (strain K12).